We begin with the raw amino-acid sequence, 185 residues long: NADH-quinone oxidoreductase subunit B (185 aa).

Cys-38, Cys-39, Cys-104, and Cys-133 together coordinate [4Fe-4S] cluster.

Belongs to the complex I 20 kDa subunit family. In terms of assembly, NDH-1 is composed of 14 different subunits. Subunits NuoB, C, D, E, F, and G constitute the peripheral sector of the complex. [4Fe-4S] cluster serves as cofactor.

The protein localises to the cell membrane. The enzyme catalyses a quinone + NADH + 5 H(+)(in) = a quinol + NAD(+) + 4 H(+)(out). NDH-1 shuttles electrons from NADH, via FMN and iron-sulfur (Fe-S) centers, to quinones in the respiratory chain. The immediate electron acceptor for the enzyme in this species is believed to be a menaquinone. Couples the redox reaction to proton translocation (for every two electrons transferred, four hydrogen ions are translocated across the cytoplasmic membrane), and thus conserves the redox energy in a proton gradient. The protein is NADH-quinone oxidoreductase subunit B of Cutibacterium acnes (strain DSM 16379 / KPA171202) (Propionibacterium acnes).